The sequence spans 471 residues: Alpha-galactosidase (471 aa).

The signal sequence occupies residues 1-18 (MFNLNFFNYTCHCEWCFW). Residues Cys42 and Cys74 are joined by a disulfide bond. Residue Asn43 is glycosylated (N-linked (GlcNAc...) asparagine). Substrate-binding residues include Asp72 and Asp73. The N-linked (GlcNAc...) asparagine glycan is linked to Asn105. A disulfide bond links Cys121 and Cys151. Lys147 is a binding site for substrate. Residue Asp149 is the Nucleophile of the active site. N-linked (GlcNAc...) asparagine glycosylation occurs at Asn175. Arg205 is a substrate binding site. Asp209 (proton donor) is an active-site residue. 2 cysteine pairs are disulfide-bonded: Cys221/Cys237 and Cys223/Cys230. Gln251 is a binding site for substrate. Asn270, Asn370, Asn403, Asn417, Asn422, and Asn454 each carry an N-linked (GlcNAc...) asparagine glycan.

The protein belongs to the glycosyl hydrolase 27 family. Homotetramer.

It localises to the secreted. It catalyses the reaction Hydrolysis of terminal, non-reducing alpha-D-galactose residues in alpha-D-galactosides, including galactose oligosaccharides, galactomannans and galactolipids.. This is Alpha-galactosidase (MEL) from Saccharomyces paradoxus (Yeast).